Here is a 351-residue protein sequence, read N- to C-terminus: Putative glycosyltransferase 45 (351 aa).

The protein belongs to the glycosyltransferase group 1 family.

In Sulfolobus islandicus filamentous virus (isolate Iceland/Hveragerdi) (SIFV), this protein is Putative glycosyltransferase 45 (SIFV0045).